A 284-amino-acid chain; its full sequence is ATP synthase gamma chain (284 aa).

The protein belongs to the ATPase gamma chain family. F-type ATPases have 2 components, CF(1) - the catalytic core - and CF(0) - the membrane proton channel. CF(1) has five subunits: alpha(3), beta(3), gamma(1), delta(1), epsilon(1). CF(0) has three main subunits: a, b and c.

It localises to the cell membrane. Functionally, produces ATP from ADP in the presence of a proton gradient across the membrane. The gamma chain is believed to be important in regulating ATPase activity and the flow of protons through the CF(0) complex. The polypeptide is ATP synthase gamma chain (Bacillus licheniformis (strain ATCC 14580 / DSM 13 / JCM 2505 / CCUG 7422 / NBRC 12200 / NCIMB 9375 / NCTC 10341 / NRRL NRS-1264 / Gibson 46)).